Consider the following 395-residue polypeptide: ATP phosphoribosyltransferase regulatory subunit (395 aa).

Belongs to the class-II aminoacyl-tRNA synthetase family. HisZ subfamily. Heteromultimer composed of HisG and HisZ subunits.

The protein resides in the cytoplasm. Its pathway is amino-acid biosynthesis; L-histidine biosynthesis; L-histidine from 5-phospho-alpha-D-ribose 1-diphosphate: step 1/9. Functionally, required for the first step of histidine biosynthesis. May allow the feedback regulation of ATP phosphoribosyltransferase activity by histidine. In Ectopseudomonas mendocina (strain ymp) (Pseudomonas mendocina), this protein is ATP phosphoribosyltransferase regulatory subunit.